The sequence spans 559 residues: Sesquiterpene synthase (559 aa).

3 residues coordinate Mg(2+): Asp-312, Asp-316, and Glu-464. Residues 312 to 316 (DDIYD) carry the DDXXD motif motif.

This sequence belongs to the terpene synthase family. Tpsa subfamily. Mg(2+) serves as cofactor. Requires Mn(2+) as cofactor.

In terms of biological role, catalyzes alpha-humulene and delta-cadinene, as well as beta-elemene, the thermal rearrangement product of germacrene A and several other bicyclic sesquiterpenes when incubated with (2E,6E)-farnesyl diphosphate. This chain is Sesquiterpene synthase, found in Santalum austrocaledonicum (Sandalwood).